A 198-amino-acid polypeptide reads, in one-letter code: Dual specificity protein phosphatase 13B (198 aa).

The region spanning 45-193 (HIDEVWPSLF…LQVLDNRLGR (149 aa)) is the Tyrosine-protein phosphatase domain. The active-site Phosphocysteine intermediate is the cysteine 138.

It belongs to the protein-tyrosine phosphatase family. Non-receptor class dual specificity subfamily. Highly expressed in the testis (at protein level). Also found in the skeletal muscle.

It catalyses the reaction O-phospho-L-tyrosyl-[protein] + H2O = L-tyrosyl-[protein] + phosphate. The catalysed reaction is O-phospho-L-seryl-[protein] + H2O = L-seryl-[protein] + phosphate. The enzyme catalyses O-phospho-L-threonyl-[protein] + H2O = L-threonyl-[protein] + phosphate. Its function is as follows. Dual specificity phosphatase that dephosphorylates MAPK8/JNK and MAPK14/p38, but not MAPK1/ERK2, in vitro. Exhibits intrinsic phosphatase activity towards both phospho-seryl/threonyl and -tyrosyl residues, with similar specific activities in vitro. The protein is Dual specificity protein phosphatase 13B of Homo sapiens (Human).